We begin with the raw amino-acid sequence, 295 residues long: Septu protein PtuB (295 aa).

In terms of biological role, component of antiviral defense system Septu type II, composed of PtuA and PtuB. Expression of Septu type II in B.subtilis (strain BEST7003) confers resistance to phages SBSphiC and SpBeta. May be a nuclease. This chain is Septu protein PtuB, found in Bacillus mycoides (strain KBAB4) (Bacillus weihenstephanensis).